A 282-amino-acid chain; its full sequence is Bifunctional protein FolD (282 aa).

Residues 165-167 (GAS) and Ile-231 contribute to the NADP(+) site.

The protein belongs to the tetrahydrofolate dehydrogenase/cyclohydrolase family. As to quaternary structure, homodimer.

It carries out the reaction (6R)-5,10-methylene-5,6,7,8-tetrahydrofolate + NADP(+) = (6R)-5,10-methenyltetrahydrofolate + NADPH. The enzyme catalyses (6R)-5,10-methenyltetrahydrofolate + H2O = (6R)-10-formyltetrahydrofolate + H(+). The protein operates within one-carbon metabolism; tetrahydrofolate interconversion. Functionally, catalyzes the oxidation of 5,10-methylenetetrahydrofolate to 5,10-methenyltetrahydrofolate and then the hydrolysis of 5,10-methenyltetrahydrofolate to 10-formyltetrahydrofolate. The sequence is that of Bifunctional protein FolD from Francisella tularensis subsp. tularensis (strain FSC 198).